The primary structure comprises 311 residues: Methionyl-tRNA formyltransferase (311 aa).

112–115 (SLLP) lines the (6S)-5,6,7,8-tetrahydrofolate pocket.

It belongs to the Fmt family.

The catalysed reaction is L-methionyl-tRNA(fMet) + (6R)-10-formyltetrahydrofolate = N-formyl-L-methionyl-tRNA(fMet) + (6S)-5,6,7,8-tetrahydrofolate + H(+). Its function is as follows. Attaches a formyl group to the free amino group of methionyl-tRNA(fMet). The formyl group appears to play a dual role in the initiator identity of N-formylmethionyl-tRNA by promoting its recognition by IF2 and preventing the misappropriation of this tRNA by the elongation apparatus. The protein is Methionyl-tRNA formyltransferase of Rhizobium meliloti (strain 1021) (Ensifer meliloti).